Here is a 1012-residue protein sequence, read N- to C-terminus: Structural polyprotein (1012 aa).

Aspartate 30 is an a divalent metal cation binding site. The 243-residue stretch at 513–755 (ADKGYEVVAN…AGRQYHLAMA (243 aa)) folds into the Peptidase S50 domain. Serine 652 (nucleophile) is an active-site residue. Lysine 692 is a catalytic residue. The disordered stretch occupies residues 970-1012 (MEMKHRNPRRAPPKPKPKPNAPSQRPPGRLGRWIRTVSDEDLE). Residues 975–986 (RNPRRAPPKPKP) show a composition bias toward basic residues. The tract at residues 1003–1012 (IRTVSDEDLE) is interaction with VP1 protein.

In terms of assembly, homotrimer. A central divalent metal stabilizes the VP2 trimer. Interacts with host ITGA4/ITGB1. Homodimer. Interacts (via C-terminus) with VP1 in the cytoplasm. Interacts with VP2. In terms of processing, specific enzymatic cleavages yield mature proteins. The capsid assembly seems to be regulated by polyprotein processing. The protease VP4 cleaves itself off the polyprotein, thus releasing pre-VP2 and VP3 within the infected cell. During capsid assembly, the C-terminus of pre-VP2 is further processed by VP4, giving rise to VP2, the external capsid protein and three small peptides that all stay closely associated with the capsid.

It localises to the virion. It is found in the host cytoplasm. Functionally, capsid protein VP2 self assembles to form an icosahedral capsid with a T=13 symmetry, about 70 nm in diameter, and consisting of 260 VP2 trimers. The capsid encapsulates the genomic dsRNA. VP2 is also involved in attachment and entry into the host cell by interacting with host ITGA4/ITGB1. Its function is as follows. The precursor of VP2 plays an important role in capsid assembly. First, pre-VP2 and VP2 oligomers assemble to form a procapsid. Then, the pre-VP2 intermediates may be processed into VP2 proteins by proteolytic cleavage mediated by VP4 to obtain the mature virion. The final capsid is composed of pentamers and hexamers but VP2 has a natural tendency to assemble into all-pentameric structures. Therefore pre-VP2 may be required to allow formation of the hexameric structures. Protease VP4 is a serine protease that cleaves the polyprotein into its final products. Pre-VP2 is first partially cleaved, and may be completely processed by VP4 upon capsid maturation. In terms of biological role, capsid protein VP3 plays a key role in virion assembly by providing a scaffold for the capsid made of VP2. May self-assemble to form a T=4-like icosahedral inner-capsid composed of at least 180 trimers. Plays a role in genomic RNA packaging by recruiting VP1 into the capsid and interacting with the dsRNA genome segments to form a ribonucleoprotein complex. Additionally, the interaction of the VP3 C-terminal tail with VP1 removes the inherent structural blockade of the polymerase active site. Thus, VP3 can also function as a transcriptional activator. Functionally, structural peptide 1 is a small peptide derived from pre-VP2 C-terminus. It destabilizes and perforates cell membranes, suggesting a role during entry. Its function is as follows. Structural peptide 2 is a small peptide derived from pVP2 C-terminus. It is not essential for the virus viability, but viral growth is affected when missing. Structural peptide 3 is a small peptide derived from pVP2 C-terminus. It is not essential for the virus viability, but viral growth is affected when missing. In terms of biological role, structural peptide 4 is a small peptide derived from pVP2 C-terminus. It is essential for the virus viability. This Avian infectious bursal disease virus (strain Australian 002-73) (IBDV) protein is Structural polyprotein.